Consider the following 552-residue polypeptide: Rqc2 homolog RqcH (552 aa).

2 coiled-coil regions span residues 271-317 (RDRV…QKGE) and 357-398 (NAQR…MLGQ).

It belongs to the NEMF family. In terms of assembly, associates with stalled 50S ribosomal subunits, binds to RqcH. Recombinant protein interacts with the N-terminal 30 kDa of human fibronectin (FN1).

Key component of the ribosome quality control system (RQC), a ribosome-associated complex that mediates the extraction of incompletely synthesized nascent chains from stalled ribosomes and their subsequent degradation. RqcH recruits Ala-charged tRNA, and with RqcP directs the elongation of stalled nascent chains on 50S ribosomal subunits, leading to non-templated C-terminal alanine extensions (Ala tail). The Ala tail promotes nascent chain degradation. May add between 1 and at least 8 Ala residues. Binds to stalled 50S ribosomal subunits. The polypeptide is Rqc2 homolog RqcH (Streptococcus suis (strain 05ZYH33)).